A 180-amino-acid polypeptide reads, in one-letter code: Acireductone dioxygenase (180 aa).

Fe(2+) contacts are provided by His-97, His-99, Glu-103, and His-141. Ni(2+) contacts are provided by His-97, His-99, Glu-103, and His-141.

This sequence belongs to the acireductone dioxygenase (ARD) family. In terms of assembly, monomer. Fe(2+) serves as cofactor. It depends on Ni(2+) as a cofactor.

The enzyme catalyses 1,2-dihydroxy-5-(methylsulfanyl)pent-1-en-3-one + O2 = 3-(methylsulfanyl)propanoate + CO + formate + 2 H(+). The catalysed reaction is 1,2-dihydroxy-5-(methylsulfanyl)pent-1-en-3-one + O2 = 4-methylsulfanyl-2-oxobutanoate + formate + 2 H(+). It participates in amino-acid biosynthesis; L-methionine biosynthesis via salvage pathway; L-methionine from S-methyl-5-thio-alpha-D-ribose 1-phosphate: step 5/6. Functionally, catalyzes 2 different reactions between oxygen and the acireductone 1,2-dihydroxy-3-keto-5-methylthiopentene (DHK-MTPene) depending upon the metal bound in the active site. Fe-containing acireductone dioxygenase (Fe-ARD) produces formate and 2-keto-4-methylthiobutyrate (KMTB), the alpha-ketoacid precursor of methionine in the methionine recycle pathway. Ni-containing acireductone dioxygenase (Ni-ARD) produces methylthiopropionate, carbon monoxide and formate, and does not lie on the methionine recycle pathway. The sequence is that of Acireductone dioxygenase from Serratia proteamaculans (strain 568).